Here is a 344-residue protein sequence, read N- to C-terminus: Anthranilate phosphoribosyltransferase (344 aa).

5-phospho-alpha-D-ribose 1-diphosphate is bound by residues glycine 80, 83–84, threonine 88, 90–93, 108–116, and serine 120; these read GD, NVST, and KHGNRSVSS. Glycine 80 provides a ligand contact to anthranilate. Mg(2+) is bound at residue serine 92. Asparagine 111 lines the anthranilate pocket. Position 166 (arginine 166) interacts with anthranilate. Mg(2+) contacts are provided by aspartate 225 and glutamate 226.

It belongs to the anthranilate phosphoribosyltransferase family. Homodimer. The cofactor is Mg(2+).

The enzyme catalyses N-(5-phospho-beta-D-ribosyl)anthranilate + diphosphate = 5-phospho-alpha-D-ribose 1-diphosphate + anthranilate. The protein operates within amino-acid biosynthesis; L-tryptophan biosynthesis; L-tryptophan from chorismate: step 2/5. Its function is as follows. Catalyzes the transfer of the phosphoribosyl group of 5-phosphorylribose-1-pyrophosphate (PRPP) to anthranilate to yield N-(5'-phosphoribosyl)-anthranilate (PRA). The protein is Anthranilate phosphoribosyltransferase of Legionella pneumophila (strain Lens).